The primary structure comprises 394 residues: T-cell acute lymphocytic leukemia protein 1 (394 aa).

Positions 1-17 (MSLKMMERLSTDMDGTR) are enriched in basic and acidic residues. Residues 1–49 (MSLKMMERLSTDMDGTRDVASPPARQDAAEPERTVELSGVKEGAAPNSP) are disordered. A run of 7 repeats spans residues 83-89 (TELCRAT), 94-100 (TELCRAP), 105-111 (TELCRAP), 116-122 (TELCRAP), 127-133 (TELCRPP), 149-155 (SELCRAP), and 167-173 (TELCRPP). Positions 83-173 (TELCRATLTP…TATTELCRPP (91 aa)) are 7 X 7 AA approximate repeats of [TS]-E-L-C-R-[AP]-P. In terms of domain architecture, bHLH spans 262–314 (VRRIFTNSRERWRQQNVNGAFAELRKLIPTHPPDKKLSKNEILRLAMKYINFL). The interval 347-394 (LSPNSSCGSSLDGAPSPDSYSEEHDALDSKHSRNLHQAMLPIDGSGQR) is disordered. Residues 367-377 (SEEHDALDSKH) are compositionally biased toward basic and acidic residues.

First expressed in patches on the ventral side of the embryo in a region that will give rise to hematopoietic tissue. By late neurula stages, expressed throughout the ventral blood island region. By tailbud stages, expression extends to probable vascular progenitor cells, but is excluded from the presumptive liver anlage. Also expressed in the central nervous system at the tailbud stage.

Its subcellular location is the nucleus. Its function is as follows. Transcription factor that acts synergistically with lmo2 and gata1 to specify embryonic dorsal mesoderm to a hematopoietic fate. The sequence is that of T-cell acute lymphocytic leukemia protein 1 from Xenopus laevis (African clawed frog).